We begin with the raw amino-acid sequence, 189 residues long: Threonylcarbamoyl-AMP synthase (189 aa).

A YrdC-like domain is found at 9 to 189 (ASAQRKLSVY…IDGETGKRLR (181 aa)).

This sequence belongs to the SUA5 family. TsaC subfamily.

The protein resides in the cytoplasm. It carries out the reaction L-threonine + hydrogencarbonate + ATP = L-threonylcarbamoyladenylate + diphosphate + H2O. Its function is as follows. Required for the formation of a threonylcarbamoyl group on adenosine at position 37 (t(6)A37) in tRNAs that read codons beginning with adenine. Catalyzes the conversion of L-threonine, HCO(3)(-)/CO(2) and ATP to give threonylcarbamoyl-AMP (TC-AMP) as the acyladenylate intermediate, with the release of diphosphate. The chain is Threonylcarbamoyl-AMP synthase from Neisseria gonorrhoeae (strain ATCC 700825 / FA 1090).